The primary structure comprises 205 residues: MAQLYFYYSAMNAGKSTALLQSSYNYQERGMRTVVYTAEIDDRFGAGKVSSRIGLSSPAKLFNQNTSLFEEIRAESARQTIHCVLVDESQFLTRQQVYQLSEVVDKLDIPVLCYGLRTDFRGELFVGSQYLLAWSDKLVELKTICFCGRKASMVLRLDQDGRPYNEGEQVVIGGNERYVSVCRKHYKDALEEGSLTAIQERHRHI.

ATP is bound by residues 9 to 16 (SAMNAGKS) and 87 to 90 (DESQ). E88 serves as the catalytic Proton acceptor. Residues C145, C147, C182, and H185 each contribute to the Zn(2+) site.

It belongs to the thymidine kinase family. In terms of assembly, homotetramer.

It localises to the cytoplasm. The catalysed reaction is thymidine + ATP = dTMP + ADP + H(+). This Salmonella paratyphi A (strain ATCC 9150 / SARB42) protein is Thymidine kinase.